A 469-amino-acid polypeptide reads, in one-letter code: 3-isopropylmalate dehydratase large subunit (469 aa).

3 residues coordinate [4Fe-4S] cluster: Cys-350, Cys-410, and Cys-413.

It belongs to the aconitase/IPM isomerase family. LeuC type 1 subfamily. Heterodimer of LeuC and LeuD. [4Fe-4S] cluster serves as cofactor.

The catalysed reaction is (2R,3S)-3-isopropylmalate = (2S)-2-isopropylmalate. Its pathway is amino-acid biosynthesis; L-leucine biosynthesis; L-leucine from 3-methyl-2-oxobutanoate: step 2/4. In terms of biological role, catalyzes the isomerization between 2-isopropylmalate and 3-isopropylmalate, via the formation of 2-isopropylmaleate. The polypeptide is 3-isopropylmalate dehydratase large subunit (Rhodopseudomonas palustris (strain ATCC BAA-98 / CGA009)).